Consider the following 92-residue polypeptide: Small ribosomal subunit protein uS19 (92 aa).

Belongs to the universal ribosomal protein uS19 family.

Its function is as follows. Protein S19 forms a complex with S13 that binds strongly to the 16S ribosomal RNA. The chain is Small ribosomal subunit protein uS19 from Trichormus variabilis (strain ATCC 29413 / PCC 7937) (Anabaena variabilis).